The primary structure comprises 467 residues: Regulatory protein NPR6 (467 aa).

A BTB domain is found at 27-111 (SDVTFSVEGR…LYSGQVSIVP (85 aa)). Residues 117–131 (RSNCGDRGCWHTHCT) form a C2HC NPR-type zinc finger. 4 residues coordinate Zn(2+): cysteine 120, cysteine 125, histidine 127, and cysteine 130. ANK repeat units follow at residues 247-276 (QKIR…LNLD), 277-306 (ESLA…DVNY), 311-340 (TGKT…DPNV), and 344-378 (DGIT…KLRL). A disordered region spans residues 434–467 (RDIGDDNSNQREGMNLHHHHHDPSTMYHHHHHHF). Basic residues predominate over residues 449–467 (LHHHHHDPSTMYHHHHHHF).

It belongs to the plant 'ANKYRIN-BTB/POZ' family. 'NOOT-BOP-COCH-like' (NBCL) subfamily. As to quaternary structure, homodimer or heterodimer with BOP2. Interacts with PAN.

Its subcellular location is the cytoplasm. The protein localises to the nucleus. Its pathway is protein modification; protein ubiquitination. In terms of biological role, may act as a substrate-specific adapter of an E3 ubiquitin-protein ligase complex (CUL3-RBX1-BTB) which mediates the ubiquitination and subsequent proteasomal degradation of target proteins. Acts redundantly with BOP2. BOP1/2 promote leaf and floral meristem fate and determinacy in a pathway targeting AP1 and AGL24. BOP1/2 act as transcriptional co-regulators through direct interaction with TGA factors, including PAN, a direct regulator of AP1. Controls lateral organ fate through positive regulation of adaxial-abaxial polarity genes ATHB-14/PHB, YAB1/FIL and YAB3, and through positive regulation of LOB domain-containing genes LOB, LBD6/AS2 and LBD36. Promotes and maintains a developmentally determinate state in leaf cells through the negative regulation of JAG, JGL and class I KNOX genes. Is also involved in nectary development, formation of normal abscission zones (AZs) and suppression of bract formation, probably by regulating the cell wall disorganization. The sequence is that of Regulatory protein NPR6 from Arabidopsis thaliana (Mouse-ear cress).